Reading from the N-terminus, the 408-residue chain is Imidazolonepropionase (408 aa).

Residues histidine 73 and histidine 75 each coordinate Fe(3+). Positions 73 and 75 each coordinate Zn(2+). Residues arginine 82, tyrosine 145, and histidine 178 each coordinate 4-imidazolone-5-propanoate. Tyrosine 145 lines the N-formimidoyl-L-glutamate pocket. Histidine 243 contributes to the Fe(3+) binding site. Histidine 243 serves as a coordination point for Zn(2+). Glutamine 246 is a 4-imidazolone-5-propanoate binding site. Residue aspartate 318 participates in Fe(3+) binding. Zn(2+) is bound at residue aspartate 318. Residues asparagine 320 and glycine 322 each contribute to the N-formimidoyl-L-glutamate site. Serine 323 is a binding site for 4-imidazolone-5-propanoate.

It belongs to the metallo-dependent hydrolases superfamily. HutI family. Zn(2+) serves as cofactor. Requires Fe(3+) as cofactor.

It is found in the cytoplasm. It carries out the reaction 4-imidazolone-5-propanoate + H2O = N-formimidoyl-L-glutamate. It participates in amino-acid degradation; L-histidine degradation into L-glutamate; N-formimidoyl-L-glutamate from L-histidine: step 3/3. Its function is as follows. Catalyzes the hydrolytic cleavage of the carbon-nitrogen bond in imidazolone-5-propanoate to yield N-formimidoyl-L-glutamate. It is the third step in the universal histidine degradation pathway. The protein is Imidazolonepropionase of Shewanella sp. (strain MR-4).